The following is a 214-amino-acid chain: Holliday junction branch migration complex subunit RuvA (214 aa).

The segment at 1-63 is domain I; sequence MISFLRGTVA…EDSLTLFGFS (63 aa). The segment at 64 to 142 is domain II; sequence SDDEREVFDV…PHGTGAAAAP (79 aa). Positions 143–153 are flexible linker; the sequence is AAAASAPWKPQ. Residues 153–214 form a domain III region; sequence QVVAAMTSLG…RAGNRVGSRG (62 aa).

It belongs to the RuvA family. Homotetramer. Forms an RuvA(8)-RuvB(12)-Holliday junction (HJ) complex. HJ DNA is sandwiched between 2 RuvA tetramers; dsDNA enters through RuvA and exits via RuvB. An RuvB hexamer assembles on each DNA strand where it exits the tetramer. Each RuvB hexamer is contacted by two RuvA subunits (via domain III) on 2 adjacent RuvB subunits; this complex drives branch migration. In the full resolvosome a probable DNA-RuvA(4)-RuvB(12)-RuvC(2) complex forms which resolves the HJ.

The protein resides in the cytoplasm. Its function is as follows. The RuvA-RuvB-RuvC complex processes Holliday junction (HJ) DNA during genetic recombination and DNA repair, while the RuvA-RuvB complex plays an important role in the rescue of blocked DNA replication forks via replication fork reversal (RFR). RuvA specifically binds to HJ cruciform DNA, conferring on it an open structure. The RuvB hexamer acts as an ATP-dependent pump, pulling dsDNA into and through the RuvAB complex. HJ branch migration allows RuvC to scan DNA until it finds its consensus sequence, where it cleaves and resolves the cruciform DNA. The protein is Holliday junction branch migration complex subunit RuvA of Arthrobacter sp. (strain FB24).